Consider the following 624-residue polypeptide: Phosphoenolpyruvate carboxykinase (ATP) 1 (624 aa).

Residues methionine 1–valine 22 form a disordered region. Glycine 322 to threonine 329 is an ATP binding site.

The protein belongs to the phosphoenolpyruvate carboxykinase (ATP) family. Homohexamer. Green leaves but not in roots or etiolated shoots.

Its subcellular location is the cytoplasm. It carries out the reaction oxaloacetate + ATP = phosphoenolpyruvate + ADP + CO2. Its pathway is carbohydrate biosynthesis; gluconeogenesis. This chain is Phosphoenolpyruvate carboxykinase (ATP) 1 (PCK1), found in Urochloa panicoides (Panic liverseed grass).